The following is a 428-amino-acid chain: Serine--tRNA ligase (428 aa).

Residue 235 to 237 (TAE) participates in L-serine binding. Residue 266–268 (RSE) coordinates ATP. E289 provides a ligand contact to L-serine. 353-356 (EISS) is a binding site for ATP. Position 389 (S389) interacts with L-serine.

Belongs to the class-II aminoacyl-tRNA synthetase family. Type-1 seryl-tRNA synthetase subfamily. Homodimer. The tRNA molecule binds across the dimer.

It localises to the cytoplasm. The catalysed reaction is tRNA(Ser) + L-serine + ATP = L-seryl-tRNA(Ser) + AMP + diphosphate + H(+). It carries out the reaction tRNA(Sec) + L-serine + ATP = L-seryl-tRNA(Sec) + AMP + diphosphate + H(+). The protein operates within aminoacyl-tRNA biosynthesis; selenocysteinyl-tRNA(Sec) biosynthesis; L-seryl-tRNA(Sec) from L-serine and tRNA(Sec): step 1/1. Its function is as follows. Catalyzes the attachment of serine to tRNA(Ser). Is also able to aminoacylate tRNA(Sec) with serine, to form the misacylated tRNA L-seryl-tRNA(Sec), which will be further converted into selenocysteinyl-tRNA(Sec). This chain is Serine--tRNA ligase, found in Shewanella sp. (strain ANA-3).